Reading from the N-terminus, the 318-residue chain is Bis(5'-nucleosyl)-tetraphosphatase, symmetrical (318 aa).

The interval 269–318 (PGREVTGPAPVARAPRRPRERLGRQRSRGNRGNAGNTAVPAKPPVDTPQD) is disordered. Basic residues predominate over residues 282–297 (APRRPRERLGRQRSRG). Pro residues predominate over residues 309–318 (AKPPVDTPQD).

The protein belongs to the Ap4A hydrolase family.

The catalysed reaction is P(1),P(4)-bis(5'-adenosyl) tetraphosphate + H2O = 2 ADP + 2 H(+). Its function is as follows. Hydrolyzes diadenosine 5',5'''-P1,P4-tetraphosphate to yield ADP. The chain is Bis(5'-nucleosyl)-tetraphosphatase, symmetrical from Xanthomonas oryzae pv. oryzae (strain PXO99A).